A 112-amino-acid polypeptide reads, in one-letter code: Glutaredoxin-C6 (112 aa).

One can recognise a Glutaredoxin domain in the interval L3 to A103. C23 and C26 are disulfide-bonded.

This sequence belongs to the glutaredoxin family. CPYC subfamily. Post-translationally, the N-terminus is blocked. In terms of tissue distribution, expressed in aleurone layer.

It localises to the cytoplasm. In terms of biological role, has a glutathione-disulfide oxidoreductase activity in the presence of NADPH and glutathione reductase. Reduces low molecular weight disulfides and proteins. Possesses thioltransferase, dehydroascorbate reductase and GSH-dependent peroxidase activities in vitro. The chain is Glutaredoxin-C6 (GRXC6) from Oryza sativa subsp. japonica (Rice).